The chain runs to 152 residues: MGRFIFMSFGLLVVAASLRGTGADCLSGWSSYEGHCYKAFEKYKTWEDAERVCTEQAKGAHLVSIESSGEADFVAQLVTQNMKRLDFYIWIGLRVQGKVKQCNSEWSDGSSVSYENWIEAESKTCLGLEKETDFRKWVNIYCGQQNPFVCEA.

An N-terminal signal peptide occupies residues 1–23 (MGRFIFMSFGLLVVAASLRGTGA). Residues 24–152 (DCLSGWSSYE…GQQNPFVCEA (129 aa)) form the C-type lectin domain. 3 cysteine pairs are disulfide-bonded: cysteine 25/cysteine 36, cysteine 53/cysteine 150, and cysteine 125/cysteine 142. The Ca(2+) site is built by serine 64, glutamate 66, and glutamate 70. Residue glutamate 151 participates in Ca(2+) binding.

The protein belongs to the snaclec family. As to quaternary structure, heterodimer of subunits A and B; disulfide-linked. In terms of tissue distribution, expressed by the venom gland.

The protein localises to the secreted. Functionally, anticoagulant protein which binds to the gamma-carboxyglutamic acid-domain regions of factors IX (F9) and factor X (F10) in the presence of calcium with a 1 to 1 stoichiometry. In Protobothrops flavoviridis (Habu), this protein is Snaclec coagulation factor IX/factor X-binding protein subunit A.